Consider the following 184-residue polypeptide: Probable chemoreceptor glutamine deamidase CheD (184 aa).

This sequence belongs to the CheD family.

It carries out the reaction L-glutaminyl-[protein] + H2O = L-glutamyl-[protein] + NH4(+). In terms of biological role, probably deamidates glutamine residues to glutamate on methyl-accepting chemotaxis receptors (MCPs), playing an important role in chemotaxis. This is Probable chemoreceptor glutamine deamidase CheD from Rhizobium etli (strain CIAT 652).